A 324-amino-acid polypeptide reads, in one-letter code: MATH domain and coiled-coil domain-containing protein At3g44790 (324 aa).

Residues Tyr3–Val125 enclose the MATH domain. Residues Phe241 to Ser309 adopt a coiled-coil conformation.

In Arabidopsis thaliana (Mouse-ear cress), this protein is MATH domain and coiled-coil domain-containing protein At3g44790.